A 402-amino-acid chain; its full sequence is Endo-polygalacturonase (402 aa).

The first 23 residues, 1–23 (MEYQSGKRVLSLSLGLIGLFSAS), serve as a signal peptide directing secretion. Catalysis depends on D249, which acts as the Proton donor. H277 is a catalytic residue.

The protein belongs to the glycosyl hydrolase 28 family. Monomer.

Its subcellular location is the secreted. The catalysed reaction is (1,4-alpha-D-galacturonosyl)n+m + H2O = (1,4-alpha-D-galacturonosyl)n + (1,4-alpha-D-galacturonosyl)m.. Functionally, involved in maceration and soft-rotting of plant tissue. This chain is Endo-polygalacturonase (peh), found in Pectobacterium carotovorum subsp. carotovorum (Erwinia carotovora subsp. carotovora).